A 185-amino-acid chain; its full sequence is Photosystem I assembly protein Ycf4 (185 aa).

A run of 2 helical transmembrane segments spans residues asparagine 21–tyrosine 43 and glycine 63–leucine 85.

The protein belongs to the Ycf4 family.

Its subcellular location is the plastid. It is found in the chloroplast thylakoid membrane. Functionally, seems to be required for the assembly of the photosystem I complex. This chain is Photosystem I assembly protein Ycf4, found in Aegilops crassa (Persian goatgrass).